We begin with the raw amino-acid sequence, 92 residues long: DNA-directed RNA polymerase subunit omega (92 aa).

This sequence belongs to the RNA polymerase subunit omega family. In terms of assembly, the RNAP catalytic core consists of 2 alpha, 1 beta, 1 beta' and 1 omega subunit. When a sigma factor is associated with the core the holoenzyme is formed, which can initiate transcription.

The enzyme catalyses RNA(n) + a ribonucleoside 5'-triphosphate = RNA(n+1) + diphosphate. Promotes RNA polymerase assembly. Latches the N- and C-terminal regions of the beta' subunit thereby facilitating its interaction with the beta and alpha subunits. The chain is DNA-directed RNA polymerase subunit omega from Shewanella amazonensis (strain ATCC BAA-1098 / SB2B).